A 274-amino-acid chain; its full sequence is Ribosomal RNA small subunit methyltransferase A (274 aa).

The S-adenosyl-L-methionine site is built by His15, Leu17, Gly42, Glu64, Asp89, and Asn109.

The protein belongs to the class I-like SAM-binding methyltransferase superfamily. rRNA adenine N(6)-methyltransferase family. RsmA subfamily.

The protein localises to the cytoplasm. It carries out the reaction adenosine(1518)/adenosine(1519) in 16S rRNA + 4 S-adenosyl-L-methionine = N(6)-dimethyladenosine(1518)/N(6)-dimethyladenosine(1519) in 16S rRNA + 4 S-adenosyl-L-homocysteine + 4 H(+). Specifically dimethylates two adjacent adenosines (A1518 and A1519) in the loop of a conserved hairpin near the 3'-end of 16S rRNA in the 30S particle. May play a critical role in biogenesis of 30S subunits. The protein is Ribosomal RNA small subunit methyltransferase A of Synechococcus sp. (strain CC9605).